The primary structure comprises 459 residues: ATP synthase subunit beta (459 aa).

Residue 147 to 154 (GGAGVGKT) coordinates ATP.

Belongs to the ATPase alpha/beta chains family. As to quaternary structure, F-type ATPases have 2 components, CF(1) - the catalytic core - and CF(0) - the membrane proton channel. CF(1) has five subunits: alpha(3), beta(3), gamma(1), delta(1), epsilon(1). CF(0) has three main subunits: a(1), b(2) and c(9-12). The alpha and beta chains form an alternating ring which encloses part of the gamma chain. CF(1) is attached to CF(0) by a central stalk formed by the gamma and epsilon chains, while a peripheral stalk is formed by the delta and b chains.

Its subcellular location is the cell inner membrane. It catalyses the reaction ATP + H2O + 4 H(+)(in) = ADP + phosphate + 5 H(+)(out). Functionally, produces ATP from ADP in the presence of a proton gradient across the membrane. The catalytic sites are hosted primarily by the beta subunits. This chain is ATP synthase subunit beta, found in Hydrogenovibrio crunogenus (strain DSM 25203 / XCL-2) (Thiomicrospira crunogena).